The primary structure comprises 913 residues: DNA repair endonuclease XPF (913 aa).

Residues 1–454 (MDRGISAVRK…EVWVNLRKGD (454 aa)) form a helicase-like region. 2 leucine-zipper regions span residues 233 to 254 (LNAC…DLSL) and 270 to 298 (LDPL…LQYL). Position 289 is an N6-acetyllysine (Lys-289). Basic and acidic residues predominate over residues 453–476 (GDGPKRTMKSDKRPKDTKNKERAS). Disordered stretches follow at residues 453 to 525 (GDGP…CGGE) and 638 to 677 (VVPE…HNGT). The Nuclear localization signal signature appears at 483-488 (KRKKRE). Residues 500–509 (EPPEEGAAEE) show a composition bias toward acidic residues. Phosphoserine is present on Ser-518. Positions 638–649 (VVPEEREGRDET) are enriched in basic and acidic residues. Residues 655 to 810 (RGTVSTDAPA…PSPHATAELF (156 aa)) form a nuclease region. In terms of domain architecture, ERCC4 spans 680–760 (SIVVDMREFR…RPVLLIEFDA (81 aa)). A hhH2, dimerization with ERCC1 region spans residues 834–902 (TLPESDKYNP…QLYDFLHTAY (69 aa)).

It belongs to the XPF family. In terms of assembly, heterodimer composed of ERCC1 and ERCC4/XPF. Interacts with SLX4/BTBD12; this interaction is direct and links the ERCC1-ERCC4/XPF complex to SLX4, which may coordinate the action of the structure-specific endonuclease during DNA repair. Requires Mg(2+) as cofactor.

It localises to the nucleus. Its subcellular location is the chromosome. Its function is as follows. Catalytic component of a structure-specific DNA repair endonuclease responsible for the 5-prime incision during DNA repair, and which is essential for nucleotide excision repair (NER) and interstrand cross-link (ICL) repair. The protein is DNA repair endonuclease XPF of Cricetulus griseus (Chinese hamster).